The primary structure comprises 213 residues: 3,4-dihydroxy-2-butanone 4-phosphate synthase (213 aa).

D-ribulose 5-phosphate-binding positions include 37–38 (RE), Asp-42, 150–154 (RAGHT), and Glu-174. Glu-38 serves as a coordination point for Mg(2+). His-153 contributes to the Mg(2+) binding site.

This sequence belongs to the DHBP synthase family. As to quaternary structure, homodimer. It depends on Mg(2+) as a cofactor. Requires Mn(2+) as cofactor.

The enzyme catalyses D-ribulose 5-phosphate = (2S)-2-hydroxy-3-oxobutyl phosphate + formate + H(+). It participates in cofactor biosynthesis; riboflavin biosynthesis; 2-hydroxy-3-oxobutyl phosphate from D-ribulose 5-phosphate: step 1/1. Its function is as follows. Catalyzes the conversion of D-ribulose 5-phosphate to formate and 3,4-dihydroxy-2-butanone 4-phosphate. In Buchnera aphidicola subsp. Schizaphis graminum (strain Sg), this protein is 3,4-dihydroxy-2-butanone 4-phosphate synthase.